The sequence spans 218 residues: Thiamine-phosphate synthase (218 aa).

Residues 46–50 (QFRDK) and aspartate 83 contribute to the 4-amino-2-methyl-5-(diphosphooxymethyl)pyrimidine site. Mg(2+) is bound by residues aspartate 84 and aspartate 103. Position 122 (serine 122) interacts with 4-amino-2-methyl-5-(diphosphooxymethyl)pyrimidine. 149-151 (TNS) is a 2-[(2R,5Z)-2-carboxy-4-methylthiazol-5(2H)-ylidene]ethyl phosphate binding site. Lysine 152 is a 4-amino-2-methyl-5-(diphosphooxymethyl)pyrimidine binding site. Residues glycine 181 and 201-202 (IT) each bind 2-[(2R,5Z)-2-carboxy-4-methylthiazol-5(2H)-ylidene]ethyl phosphate.

This sequence belongs to the thiamine-phosphate synthase family. Mg(2+) is required as a cofactor.

The enzyme catalyses 2-[(2R,5Z)-2-carboxy-4-methylthiazol-5(2H)-ylidene]ethyl phosphate + 4-amino-2-methyl-5-(diphosphooxymethyl)pyrimidine + 2 H(+) = thiamine phosphate + CO2 + diphosphate. It catalyses the reaction 2-(2-carboxy-4-methylthiazol-5-yl)ethyl phosphate + 4-amino-2-methyl-5-(diphosphooxymethyl)pyrimidine + 2 H(+) = thiamine phosphate + CO2 + diphosphate. It carries out the reaction 4-methyl-5-(2-phosphooxyethyl)-thiazole + 4-amino-2-methyl-5-(diphosphooxymethyl)pyrimidine + H(+) = thiamine phosphate + diphosphate. It functions in the pathway cofactor biosynthesis; thiamine diphosphate biosynthesis; thiamine phosphate from 4-amino-2-methyl-5-diphosphomethylpyrimidine and 4-methyl-5-(2-phosphoethyl)-thiazole: step 1/1. Functionally, condenses 4-methyl-5-(beta-hydroxyethyl)thiazole monophosphate (THZ-P) and 2-methyl-4-amino-5-hydroxymethyl pyrimidine pyrophosphate (HMP-PP) to form thiamine monophosphate (TMP). The chain is Thiamine-phosphate synthase from Actinobacillus pleuropneumoniae serotype 7 (strain AP76).